Here is an 869-residue protein sequence, read N- to C-terminus: MNSANRKPLPGTKLDYFDARAAVEAIQPGAYDKLPYTSRVLAENLVRRCDPATLTDSLLQLVGRKRDLDFPWFPARVVCHDILGQTALVDLAGLRDAIADQGGDPAKVNPVVPVQLIVDHSLAVECGGFDPDAFAKNRAIEDRRNEDRFHFIDWTKQAFKNVDVIPPGNGIMHQINLEKMSPVIHADNGVAYPDTCVGTDSHTPHVDALGVIAIGVGGLEAENVMLGRASWMRLPDIVGVELTGKRQPGITATDIVLALTEFLRKEKVVGAYLEFRGEGASSLTLGDRATISNMAPEYGATAAMFFIDEQTIDYLRLTGRTDEQLKLVETYARTAGLWADSLKNAEYERVLKFDLSSVVRNMAGPSNPHKRLPTSALAERGIAVDLDKASAQEAEGLMPDGAVIIAAITSCTNTSNPRNVIAAALLARNANARGLARKPWVKSSLAPGSKAVELYLEEANLLPDLEKLGFGIVAFACTTCNGMSGALDPKIQQEIIDRDLYATAVLSGNRNFDGRIHPYAKQAFLASPPLVVAYAIAGTIRFDIEKDVLGTDQDGKPVYLKDIWPSDEEIDAIVAKSVKPEQFRKVYEPMFAITAASGESVSPLYDWRPQSTYIRRPPYWEGALAGERTLKALRPLAVLGDNITTDHLSPSNAIMLNSAAGEYLARMGLPEEDFNSYATHRGDHLTAQRATFANPTLINEMAVVDGQVKKGSLARIEPEGKVVRMWEAIETYMDRKQPLIIIAGADYGQGSSRDWAAKGVRLAGVEVIVAEGFERIHRTNLIGMGVLPLEFKPGVNRLTLGLDGTETYDVIGERQPRATLTLVVNRKNGERVEVPVTCRLDSDEEVSIYEAGGVLHFAQDFLESSRATA.

Cys-411, Cys-477, and Cys-480 together coordinate [4Fe-4S] cluster.

It belongs to the aconitase/IPM isomerase family. In terms of assembly, monomer. It depends on [4Fe-4S] cluster as a cofactor.

The enzyme catalyses citrate = D-threo-isocitrate. The catalysed reaction is (2S,3R)-3-hydroxybutane-1,2,3-tricarboxylate = 2-methyl-cis-aconitate + H2O. Its pathway is carbohydrate metabolism; tricarboxylic acid cycle; isocitrate from oxaloacetate: step 2/2. It functions in the pathway organic acid metabolism; propanoate degradation. Its function is as follows. Involved in the catabolism of short chain fatty acids (SCFA) via the tricarboxylic acid (TCA)(acetyl degradation route) and the 2-methylcitrate cycle I (propionate degradation route). Catalyzes the reversible isomerization of citrate to isocitrate via cis-aconitate. Could catalyze the hydration of 2-methyl-cis-aconitate to yield (2S,3R)-2-methylisocitrate. The apo form of AcnA functions as a RNA-binding regulatory protein. In Cupriavidus necator (Alcaligenes eutrophus), this protein is Aconitate hydratase A.